The following is a 549-amino-acid chain: Calcium-dependent protein kinase 5 (549 aa).

The N-myristoyl glycine moiety is linked to residue glycine 2. The interval 43–69 (DEPAGKKAPRGSAAAADAPHAASMKRG) is disordered. A compositionally biased stretch (low complexity) spans 52–64 (RGSAAAADAPHAA). Positions 92–350 (YALGRKLGQG…AHEVLCHPWI (259 aa)) constitute a Protein kinase domain. Residues 98–106 (LGQGQFGTT) and lysine 121 each bind ATP. Catalysis depends on aspartate 216, which acts as the Proton acceptor. Residues 356–386 (APDRPLDPAVLSRIKQFSAMNKLKKMALRVI) are autoinhibitory domain. EF-hand domains follow at residues 393–428 (EEIA…YGST), 429–464 (LKDT…LNKL), 465–500 (EREE…HNMP), and 501–534 (DAFL…GNMG). 19 residues coordinate Ca(2+): aspartate 406, aspartate 408, serine 410, glutamate 417, aspartate 442, aspartate 444, serine 446, threonine 448, glutamate 453, aspartate 478, aspartate 480, serine 482, tyrosine 484, glutamate 489, aspartate 512, aspartate 514, aspartate 516, arginine 518, and glutamate 523.

This sequence belongs to the protein kinase superfamily. Ser/Thr protein kinase family. CDPK subfamily.

It is found in the membrane. The enzyme catalyses L-seryl-[protein] + ATP = O-phospho-L-seryl-[protein] + ADP + H(+). It catalyses the reaction L-threonyl-[protein] + ATP = O-phospho-L-threonyl-[protein] + ADP + H(+). With respect to regulation, activated by calcium. Autophosphorylation may play an important role in the regulation of the kinase activity. Its function is as follows. May play a role in signal transduction pathways that involve calcium as a second messenger. The chain is Calcium-dependent protein kinase 5 from Oryza sativa subsp. japonica (Rice).